The following is a 353-amino-acid chain: Photosystem II protein D1 (353 aa).

T2 is subject to N-acetylthreonine. T2 is modified (phosphothreonine). 3 consecutive transmembrane segments (helical) span residues 29 to 46 (YIGW…TATS), 118 to 133 (HFLL…EWEL), and 142 to 156 (WIAV…AATA). H118 contacts chlorophyll a. Y126 provides a ligand contact to pheophytin a. D170 and E189 together coordinate [CaMn4O5] cluster. A helical membrane pass occupies residues 197-218 (FHMLGVAGVFGSSLFSAMHGSL). Residue H198 participates in chlorophyll a binding. A quinone-binding positions include H215 and 264-265 (SF). Residue H215 participates in Fe cation binding. Residue H272 participates in Fe cation binding. A helical membrane pass occupies residues 274 to 288 (FLAAWPVVGIWFTAL). 4 residues coordinate [CaMn4O5] cluster: H332, E333, D342, and A344. Positions 345 to 353 (AMEAPSVNG) are excised as a propeptide.

Belongs to the reaction center PufL/M/PsbA/D family. In terms of assembly, PSII is composed of 1 copy each of membrane proteins PsbA, PsbB, PsbC, PsbD, PsbE, PsbF, PsbH, PsbI, PsbJ, PsbK, PsbL, PsbM, PsbT, PsbX, PsbY, PsbZ, Psb30/Ycf12, at least 3 peripheral proteins of the oxygen-evolving complex and a large number of cofactors. It forms dimeric complexes. The D1/D2 heterodimer binds P680, chlorophylls that are the primary electron donor of PSII, and subsequent electron acceptors. It shares a non-heme iron and each subunit binds pheophytin, quinone, additional chlorophylls, carotenoids and lipids. D1 provides most of the ligands for the Mn4-Ca-O5 cluster of the oxygen-evolving complex (OEC). There is also a Cl(-1) ion associated with D1 and D2, which is required for oxygen evolution. The PSII complex binds additional chlorophylls, carotenoids and specific lipids. serves as cofactor. Post-translationally, tyr-161 forms a radical intermediate that is referred to as redox-active TyrZ, YZ or Y-Z. In terms of processing, C-terminally processed by CTPA; processing is essential to allow assembly of the oxygen-evolving complex and thus photosynthetic growth.

The protein localises to the plastid. The protein resides in the chloroplast thylakoid membrane. The catalysed reaction is 2 a plastoquinone + 4 hnu + 2 H2O = 2 a plastoquinol + O2. Photosystem II (PSII) is a light-driven water:plastoquinone oxidoreductase that uses light energy to abstract electrons from H(2)O, generating O(2) and a proton gradient subsequently used for ATP formation. It consists of a core antenna complex that captures photons, and an electron transfer chain that converts photonic excitation into a charge separation. The D1/D2 (PsbA/PsbD) reaction center heterodimer binds P680, the primary electron donor of PSII as well as several subsequent electron acceptors. This chain is Photosystem II protein D1, found in Vigna unguiculata (Cowpea).